Consider the following 252-residue polypeptide: MILYEYPFNERIRTLLRLEDLFERLDFFLTQEHPLQHHVALTTLFEIVDVAGRADLKSDLLKELDRQRQTLTVLRSNPQIDQEALDAVIAELETASGNLTATHGKAGQLIADNEWLTSIRSRAIIPGGTCEFDLPAYFAWQHHPGERRRADIVKWAQPLVPLRDATMIVLRLLRESGQSGKVIANAGSYQQMLSGRIYQLMQVRLDDVALGFIPEISANKYMLWVRFTQQDGDLRPKPVDADIPFQLKLCNF.

Belongs to the ZapD family. In terms of assembly, interacts with FtsZ.

Its subcellular location is the cytoplasm. Functionally, cell division factor that enhances FtsZ-ring assembly. Directly interacts with FtsZ and promotes bundling of FtsZ protofilaments, with a reduction in FtsZ GTPase activity. This Ralstonia nicotianae (strain ATCC BAA-1114 / GMI1000) (Ralstonia solanacearum) protein is Cell division protein ZapD.